The following is a 263-amino-acid chain: uncharacterized protein (263 aa).

ATP is bound at residue 12 to 19 (KGGVGKTT).

The protein belongs to the ParA family. MinD subfamily.

This is an uncharacterized protein from Methanocaldococcus jannaschii (strain ATCC 43067 / DSM 2661 / JAL-1 / JCM 10045 / NBRC 100440) (Methanococcus jannaschii).